Here is a 263-residue protein sequence, read N- to C-terminus: MNTISSVFENLDKQCALIPFITAGDPDLVSTGKALQILDSYGADIIELGLPYSDPLADGPIIQEASNRALKQGINLNKILSMVKTVNMTIKAPIVLFTYYNPVLHLGINNFIYAISNAGIRGLLIPDLPIEESEYVISVCNLFNIELILLLAPTSSRERISKIIKRAPGCIYLVSTTGVTGQKSQLTSQLKELTETVKTMTNKSIILGFGISTTEQIKEIKGWNINGIVIGSAFVKRLSGNVPEAGLEQIQSFCQDAKNAIIS.

Residues Glu47 and Asp58 each act as proton acceptor in the active site.

The protein belongs to the TrpA family. In terms of assembly, tetramer of two alpha and two beta chains.

The protein resides in the plastid. It localises to the chloroplast. It carries out the reaction (1S,2R)-1-C-(indol-3-yl)glycerol 3-phosphate + L-serine = D-glyceraldehyde 3-phosphate + L-tryptophan + H2O. The protein operates within amino-acid biosynthesis; L-tryptophan biosynthesis; L-tryptophan from chorismate: step 5/5. Functionally, the alpha subunit is responsible for the aldol cleavage of indoleglycerol phosphate to indole and glyceraldehyde 3-phosphate. The polypeptide is Tryptophan synthase alpha chain (Pyropia yezoensis (Susabi-nori)).